The chain runs to 211 residues: MGGRFIVFEGVEGCGKTSQMQLCAEWLQNLGISVILTREPGGTELGVDLRRLLLQKAEDKPIAEVTELLLYAADRAQHVAQELKPKLAQGKYILCDRYVDSTIAYQGYGRNLDMNLIHQLNDIATGGLTSDITIWLDVDVEVGLARKRGENVGLDRIEQETIAFHRRVQQGYANLAASSPSRIIRVDGQLSKETVHKTIQEILSPHLKEWL.

10 to 17 (GVEGCGKT) lines the ATP pocket.

It belongs to the thymidylate kinase family.

The enzyme catalyses dTMP + ATP = dTDP + ADP. Phosphorylation of dTMP to form dTDP in both de novo and salvage pathways of dTTP synthesis. This is Thymidylate kinase from Trichormus variabilis (strain ATCC 29413 / PCC 7937) (Anabaena variabilis).